The following is a 308-amino-acid chain: tRNA pseudouridine synthase B (308 aa).

The active-site Nucleophile is the Asp-33.

This sequence belongs to the pseudouridine synthase TruB family. Type 1 subfamily.

It catalyses the reaction uridine(55) in tRNA = pseudouridine(55) in tRNA. Responsible for synthesis of pseudouridine from uracil-55 in the psi GC loop of transfer RNAs. The chain is tRNA pseudouridine synthase B from Nitrosomonas europaea (strain ATCC 19718 / CIP 103999 / KCTC 2705 / NBRC 14298).